The sequence spans 385 residues: Calcium/calmodulin-dependent protein kinase type 1D (385 aa).

The Protein kinase domain maps to 23–279 (FEFKETLGTG…CEQAARHPWI (257 aa)). ATP is bound by residues 29-37 (LGTGAFSEV) and Lys52. Lys113 is covalently cross-linked (Glycyl lysine isopeptide (Lys-Gly) (interchain with G-Cter in SUMO2)). Ser122 is modified (phosphoserine). Catalysis depends on Asp144, which acts as the Proton acceptor. Thr180 is subject to Phosphothreonine; by CaMKK1 and CaMKK2. The interval 279–319 (IAGDTALSKNIHESVSAQIRKNFAKSKWRQAFNATAVVRHM) is autoinhibitory domain. The tract at residues 299–320 (KNFAKSKWRQAFNATAVVRHMR) is calmodulin-binding. The Nuclear export signal signature appears at 318–324 (HMRRLQL). A disordered region spans residues 363–385 (VAGVGAERRPRPTTVTTGHTGSK). A compositionally biased stretch (polar residues) spans 375–385 (TTVTTGHTGSK).

The protein belongs to the protein kinase superfamily. CAMK Ser/Thr protein kinase family. CaMK subfamily. Expressed ubiquitously with high levels in brain and low levels in kidney. Isoform 2 is highly expressed in brain compared to other tissues. In hematopoietic cell lines predominant expression was detected in T and EC cells.

It is found in the cytoplasm. The protein localises to the nucleus. The catalysed reaction is L-seryl-[protein] + ATP = O-phospho-L-seryl-[protein] + ADP + H(+). It carries out the reaction L-threonyl-[protein] + ATP = O-phospho-L-threonyl-[protein] + ADP + H(+). Its activity is regulated as follows. Activated by Ca(2+)/calmodulin. Binding of calmodulin results in conformational change that relieves intrasteric autoinhibition and allows phosphorylation of Thr-180 within the activation loop by CaMKK1 or CaMKK2. Phosphorylation of Thr-180 results in several fold increase in total activity. Unlike CaMK4, may be unable to exhibit autonomous activity after Ca(2+)/calmodulin activation. Its function is as follows. Calcium/calmodulin-dependent protein kinase that operates in the calcium-triggered CaMKK-CaMK1 signaling cascade and, upon calcium influx, activates CREB-dependent gene transcription, regulates calcium-mediated granulocyte function and respiratory burst and promotes basal dendritic growth of hippocampal neurons. In neutrophil cells, required for cytokine-induced proliferative responses and activation of the respiratory burst. Activates the transcription factor CREB1 in hippocampal neuron nuclei. May play a role in apoptosis of erythroleukemia cells. In vitro, phosphorylates transcription factor CREM isoform Beta. Isoform 1 but not isoform 2 activates CREB1. This Mus musculus (Mouse) protein is Calcium/calmodulin-dependent protein kinase type 1D (Camk1d).